A 599-amino-acid chain; its full sequence is Tryptophan 2-C-methyltransferase (599 aa).

A B12-binding domain is found at 4 to 149; that stretch reads KGTVALINPN…RALAEGRSAD (146 aa). A disordered region spans residues 167 to 197; it reads RVAPPALDPRAAPAPSSSPSPSPAPSSSSAP. Residues 168–181 show a composition bias toward low complexity; that stretch reads VAPPALDPRAAPAP. One can recognise a Radical SAM core domain in the interval 239 to 492; it reads YREGGLGSIL…IEYERQFMFD (254 aa). 3 residues coordinate [4Fe-4S] cluster: cysteine 253, cysteine 257, and cysteine 260.

It depends on [4Fe-4S] cluster as a cofactor. Cob(II)alamin is required as a cofactor.

The catalysed reaction is L-tryptophan + S-adenosyl-L-methionine = 2-methyl-L-tryptophan + S-adenosyl-L-homocysteine + H(+). In terms of biological role, involved in the biosynthetic pathway of the antibiotic thiostrepton A. First, TsrM catalyzes the transfer of a methyl group from S-adenosyl methionine (SAM) to cobalamin, leading to the formation of methylcobalamin (CH3-cobalamin) and S-adenosyl-L-homocysteine (SAH). Then the methyl group is transferred to the C2 position of tryptophan (Trp) with the concerted action of the radical SAM [4Fe-4S] center, leading to the production of methyltryptophan. This chain is Tryptophan 2-C-methyltransferase, found in Streptomyces laurentii.